The chain runs to 172 residues: C-phycocyanin-2 beta subunit (172 aa).

Position 72 is an N4-methylasparagine (asparagine 72). Positions 82 and 153 each coordinate (2R,3E)-phycocyanobilin.

Belongs to the phycobiliprotein family. In terms of assembly, heterodimer of an alpha and a beta subunit, which further assembles into trimers and the trimers into hexamers. In terms of processing, contains two covalently linked bilin chromophores.

It localises to the cellular thylakoid membrane. Functionally, light-harvesting photosynthetic bile pigment-protein from the phycobiliprotein complex (phycobilisome, PBS). Phycocyanin is the major phycobiliprotein in the PBS rod. This is C-phycocyanin-2 beta subunit (cpcB2) from Microchaete diplosiphon (Fremyella diplosiphon).